Here is a 102-residue protein sequence, read N- to C-terminus: Ferredoxin, 2Fe-2S (102 aa).

4 residues coordinate [2Fe-2S] cluster: cysteine 11, cysteine 24, cysteine 56, and cysteine 60.

This sequence belongs to the 2Fe2S Shethna-type ferredoxin family. Requires [2Fe-2S] cluster as cofactor.

In terms of biological role, ferredoxins are iron-sulfur proteins that transfer electrons in a wide variety of metabolic reactions. In Clostridium pasteurianum, this protein is Ferredoxin, 2Fe-2S.